The following is a 628-amino-acid chain: ATP-dependent zinc metalloprotease FtsH (628 aa).

The Stromal portion of the chain corresponds to 1–7 (MKLSWKT). The chain crosses the membrane as a helical span at residues 8–28 (LLLWSLPIFVVGFFFWQGFLG). Residues 29–118 (PTTTDVGSNI…AHPPKSTSAV (90 aa)) are Lumenal-facing. The chain crosses the membrane as a helical span at residues 119-139 (WGLLGNLLFPLILVGGLAFLF). Residues 140–628 (RRSNNASGGP…PEKNYYISQF (489 aa)) are Stromal-facing. 213–220 (GPPGTGKT) is a binding site for ATP. H434 is a Zn(2+) binding site. The active site involves E435. Residues H438 and D512 each contribute to the Zn(2+) site.

It in the central section; belongs to the AAA ATPase family. The protein in the C-terminal section; belongs to the peptidase M41 family. Homohexamer. Requires Zn(2+) as cofactor.

The protein resides in the plastid. Its subcellular location is the chloroplast thylakoid membrane. Acts as a processive, ATP-dependent zinc metallopeptidase. This is ATP-dependent zinc metalloprotease FtsH from Porphyra purpurea (Red seaweed).